The chain runs to 603 residues: Probable lysosomal cobalamin transporter (603 aa).

The next 9 membrane-spanning stretches (helical) occupy residues 13–33 (IWVA…ITVF), 50–70 (IVSL…IALV), 99–119 (IVYY…IPFA), 150–170 (IAFI…PTAA), 201–221 (LLMT…LALL), 318–338 (LFGG…MLIT), 353–373 (GYIL…VKAA), 381–401 (ILMA…IASV), and 422–442 (ALLI…YAVV). An N-linked (GlcNAc...) asparagine glycan is attached at N509. The helical transmembrane segment at 512–532 (VFGAIDFWAQFAFLTVFLLVF) threads the bilayer. N-linked (GlcNAc...) asparagine glycosylation occurs at N543. The tract at residues 578–603 (AKRTVGGHPNGQGYGTSGTNGTASSR) is disordered. The segment covering 585-595 (HPNGQGYGTSG) has biased composition (gly residues). N-linked (GlcNAc...) asparagine glycosylation is present at N597.

The protein belongs to the LIMR family. LMBRD1 subfamily.

It localises to the lysosome membrane. Probable lysosomal cobalamin transporter. Required to export cobalamin from lysosomes allowing its conversion to cofactors. The sequence is that of Probable lysosomal cobalamin transporter from Neurospora crassa (strain ATCC 24698 / 74-OR23-1A / CBS 708.71 / DSM 1257 / FGSC 987).